A 178-amino-acid polypeptide reads, in one-letter code: Cell division protein SepF (178 aa).

Residues 19–45 (EHYESEHHTPHKDEDDSMEHDREERRA) show a composition bias toward basic and acidic residues. The tract at residues 19-65 (EHYESEHHTPHKDEDDSMEHDREERRAPAPVREIARETPTPHAAEEE) is disordered.

It belongs to the SepF family. In terms of assembly, homodimer. Interacts with FtsZ.

The protein resides in the cytoplasm. Its function is as follows. Cell division protein that is part of the divisome complex and is recruited early to the Z-ring. Probably stimulates Z-ring formation, perhaps through the cross-linking of FtsZ protofilaments. Its function overlaps with FtsA. This is Cell division protein SepF from Arthrobacter sp. (strain FB24).